Here is a 491-residue protein sequence, read N- to C-terminus: Glutamate--tRNA ligase (491 aa).

The 'HIGH' region motif lies at 13-23 (PSPTGFLHIGN). Positions 110, 112, 137, and 139 each coordinate Zn(2+). A 'KMSKS' region motif is present at residues 254–258 (KLSKR). Lysine 257 serves as a coordination point for ATP.

The protein belongs to the class-I aminoacyl-tRNA synthetase family. Glutamate--tRNA ligase type 1 subfamily. As to quaternary structure, monomer. It depends on Zn(2+) as a cofactor.

The protein resides in the cytoplasm. It carries out the reaction tRNA(Glu) + L-glutamate + ATP = L-glutamyl-tRNA(Glu) + AMP + diphosphate. Functionally, catalyzes the attachment of glutamate to tRNA(Glu) in a two-step reaction: glutamate is first activated by ATP to form Glu-AMP and then transferred to the acceptor end of tRNA(Glu). The polypeptide is Glutamate--tRNA ligase (Listeria welshimeri serovar 6b (strain ATCC 35897 / DSM 20650 / CCUG 15529 / CIP 8149 / NCTC 11857 / SLCC 5334 / V8)).